A 249-amino-acid chain; its full sequence is Ribosomal RNA small subunit methyltransferase G (249 aa).

S-adenosyl-L-methionine-binding positions include Gly-88, Phe-93, 111-113 (DAT), 139-140 (AE), and Arg-158. The cysteines at positions 164 and 249 are disulfide-linked. Positions 245-246 (RH) are RNA binding.

Belongs to the methyltransferase superfamily. RNA methyltransferase RsmG family.

The protein resides in the cytoplasm. It catalyses the reaction guanosine(527) in 16S rRNA + S-adenosyl-L-methionine = N(7)-methylguanosine(527) in 16S rRNA + S-adenosyl-L-homocysteine. In terms of biological role, specifically methylates the N7 position of guanine in position 527 of 16S rRNA. Shows a marked preference for deproteinized 16S rRNA as substrate and is completely inactive with native 30S subunits as substrate. This Thermus thermophilus (strain ATCC 27634 / DSM 579 / HB8) protein is Ribosomal RNA small subunit methyltransferase G.